The following is a 155-amino-acid chain: Small ribosomal subunit protein uS9 (155 aa).

The protein belongs to the universal ribosomal protein uS9 family.

The protein is Small ribosomal subunit protein uS9 of Rhizobium leguminosarum bv. trifolii (strain WSM2304).